Here is a 1929-residue protein sequence, read N- to C-terminus: Myoferlin (1929 aa).

The tract at residues 1 to 53 is disordered; the sequence is MISYEPPPSAISNPTDPGGTTIIQGDGENDEEEDRDIVDAGFNPSVPGAPGQT. Acidic residues predominate over residues 27–36; that stretch reads GENDEEEDRD. C2 domains lie at 62–179 and 218–354; these read VKGK…RKWV and EDDD…EEYD. The Ca(2+) site is built by Asp267, Asp275, Asp323, Asp325, and Asp331. The segment covering 898–907 has biased composition (basic residues); the sequence is RRLVRKRKKD. The disordered stretch occupies residues 898-918; the sequence is RRLVRKRKKDPKVSTTSKAAL. 4 C2 domains span residues 996-1124, 1159-1283, 1408-1527, and 1645-1793; these read GANT…LLWY, RAPQ…TKHE, IPYP…SHCG, and GPPG…EKCS. Ca(2+) contacts are provided by Asp1028, Asp1034, Asp1090, and Asp1092. 7 residues coordinate Ca(2+): Asp1442, Asp1448, Asp1497, Asp1499, Asp1764, Ser1767, and Asp1770. Basic and acidic residues predominate over residues 1845–1858; the sequence is DAEERPAGKGRDEP. The segment at 1845-1867 is disordered; it reads DAEERPAGKGRDEPNMNPKLDPP. A helical membrane pass occupies residues 1894–1914; sequence WVFIGLIILLLVLLFLGVFFY.

This sequence belongs to the ferlin family. Requires Ca(2+) as cofactor.

The protein localises to the cell membrane. It is found in the nucleus membrane. It localises to the cytoplasmic vesicle membrane. Its function is as follows. May play a role in membrane regeneration and repair. The sequence is that of Myoferlin (myof) from Xenopus tropicalis (Western clawed frog).